The chain runs to 305 residues: UDP-N-acetylenolpyruvoylglucosamine reductase (305 aa).

In terms of domain architecture, FAD-binding PCMH-type spans 22-190 (KVGGAADFFA…LSARFRLQAG (169 aa)). Arginine 169 is an active-site residue. Catalysis depends on serine 220, which acts as the Proton donor. Glutamate 290 is an active-site residue.

This sequence belongs to the MurB family. FAD serves as cofactor.

The protein localises to the cytoplasm. The catalysed reaction is UDP-N-acetyl-alpha-D-muramate + NADP(+) = UDP-N-acetyl-3-O-(1-carboxyvinyl)-alpha-D-glucosamine + NADPH + H(+). The protein operates within cell wall biogenesis; peptidoglycan biosynthesis. In terms of biological role, cell wall formation. This is UDP-N-acetylenolpyruvoylglucosamine reductase from Synechococcus sp. (strain RCC307).